Here is a 142-residue protein sequence, read N- to C-terminus: Large ribosomal subunit protein uL16 (142 aa).

Belongs to the universal ribosomal protein uL16 family. Part of the 50S ribosomal subunit.

Binds 23S rRNA and is also seen to make contacts with the A and possibly P site tRNAs. In Trichormus variabilis (strain ATCC 29413 / PCC 7937) (Anabaena variabilis), this protein is Large ribosomal subunit protein uL16.